We begin with the raw amino-acid sequence, 88 residues long: Small ribosomal subunit protein bS20 (88 aa).

Positions 1-27 are disordered; the sequence is MANSKSAKKRALQSEKRRQHNASRRSM.

It belongs to the bacterial ribosomal protein bS20 family.

Functionally, binds directly to 16S ribosomal RNA. In Shewanella oneidensis (strain ATCC 700550 / JCM 31522 / CIP 106686 / LMG 19005 / NCIMB 14063 / MR-1), this protein is Small ribosomal subunit protein bS20.